The primary structure comprises 274 residues: Large ribosomal subunit protein uL2 (274 aa).

Residues 223 to 274 (VAMNPVDHPMGGGEGKASGGHPRSRTGLYAKGKKTRNTNKYSKNYILSRKKR) form a disordered region.

The protein belongs to the universal ribosomal protein uL2 family. Part of the 50S ribosomal subunit. Forms a bridge to the 30S subunit in the 70S ribosome.

Its function is as follows. One of the primary rRNA binding proteins. Required for association of the 30S and 50S subunits to form the 70S ribosome, for tRNA binding and peptide bond formation. It has been suggested to have peptidyltransferase activity; this is somewhat controversial. Makes several contacts with the 16S rRNA in the 70S ribosome. In Amoebophilus asiaticus (strain 5a2), this protein is Large ribosomal subunit protein uL2.